Here is a 195-residue protein sequence, read N- to C-terminus: Molybdenum cofactor guanylyltransferase (195 aa).

Residues 10–12 (LAG), Lys23, Asn51, Asp69, and Asp99 contribute to the GTP site. Mg(2+) is bound at residue Asp99.

Belongs to the MobA family. As to quaternary structure, monomer. The cofactor is Mg(2+).

It localises to the cytoplasm. It carries out the reaction Mo-molybdopterin + GTP + H(+) = Mo-molybdopterin guanine dinucleotide + diphosphate. Functionally, transfers a GMP moiety from GTP to Mo-molybdopterin (Mo-MPT) cofactor (Moco or molybdenum cofactor) to form Mo-molybdopterin guanine dinucleotide (Mo-MGD) cofactor. This chain is Molybdenum cofactor guanylyltransferase, found in Yersinia pseudotuberculosis serotype O:1b (strain IP 31758).